The following is a 106-amino-acid chain: UPF0091 protein RP266 (106 aa).

It belongs to the UPF0091 family.

The sequence is that of UPF0091 protein RP266 from Rickettsia prowazekii (strain Madrid E).